A 141-amino-acid chain; its full sequence is Large ribosomal subunit protein uL11 (141 aa).

Belongs to the universal ribosomal protein uL11 family. As to quaternary structure, part of the ribosomal stalk of the 50S ribosomal subunit. Interacts with L10 and the large rRNA to form the base of the stalk. L10 forms an elongated spine to which L12 dimers bind in a sequential fashion forming a multimeric L10(L12)X complex. In terms of processing, one or more lysine residues are methylated.

Its function is as follows. Forms part of the ribosomal stalk which helps the ribosome interact with GTP-bound translation factors. In Herpetosiphon aurantiacus (strain ATCC 23779 / DSM 785 / 114-95), this protein is Large ribosomal subunit protein uL11.